The sequence spans 252 residues: Phosphoglycolate phosphatase (252 aa).

Catalysis depends on Asp-13, which acts as the Nucleophile. Mg(2+) contacts are provided by Asp-13, Asp-15, and Asp-192.

The protein belongs to the HAD-like hydrolase superfamily. CbbY/CbbZ/Gph/YieH family. As to quaternary structure, monomer. Requires Mg(2+) as cofactor. The cofactor is chloride.

It carries out the reaction 2-phosphoglycolate + H2O = glycolate + phosphate. Its pathway is organic acid metabolism; glycolate biosynthesis; glycolate from 2-phosphoglycolate: step 1/1. In terms of biological role, specifically catalyzes the dephosphorylation of 2-phosphoglycolate. Is involved in the dissimilation of the intracellular 2-phosphoglycolate formed during the DNA repair of 3'-phosphoglycolate ends, a major class of DNA lesions induced by oxidative stress. The chain is Phosphoglycolate phosphatase from Shigella dysenteriae serotype 1 (strain Sd197).